The sequence spans 316 residues: Glucan endo-1,3-beta-glucosidase GV (316 aa).

The active-site Proton donor is glutamate 99. Glutamate 239 serves as the catalytic Nucleophile.

Belongs to the glycosyl hydrolase 17 family.

It localises to the cytoplasm. It carries out the reaction Hydrolysis of (1-&gt;3)-beta-D-glucosidic linkages in (1-&gt;3)-beta-D-glucans.. May provide a degree of protection against microbial invasion of germinated barley grain through its ability to degrade fungal cell wall polysaccharides. This chain is Glucan endo-1,3-beta-glucosidase GV, found in Hordeum vulgare (Barley).